The sequence spans 515 residues: 2-isopropylmalate synthase (515 aa).

The region spanning 5-267 is the Pyruvate carboxyltransferase domain; it reads VIIFDTTLRD…DTHINTQEIH (263 aa). Residues Asp14, His202, His204, and Asn238 each coordinate Mn(2+). A regulatory domain region spans residues 392-515; that stretch reads VLDKLSAHST…VADIKNHKHH (124 aa).

It belongs to the alpha-IPM synthase/homocitrate synthase family. LeuA type 1 subfamily. As to quaternary structure, homodimer. Mn(2+) serves as cofactor.

Its subcellular location is the cytoplasm. It catalyses the reaction 3-methyl-2-oxobutanoate + acetyl-CoA + H2O = (2S)-2-isopropylmalate + CoA + H(+). The protein operates within amino-acid biosynthesis; L-leucine biosynthesis; L-leucine from 3-methyl-2-oxobutanoate: step 1/4. Functionally, catalyzes the condensation of the acetyl group of acetyl-CoA with 3-methyl-2-oxobutanoate (2-ketoisovalerate) to form 3-carboxy-3-hydroxy-4-methylpentanoate (2-isopropylmalate). This is 2-isopropylmalate synthase from Haemophilus influenzae (strain ATCC 51907 / DSM 11121 / KW20 / Rd).